Consider the following 55-residue polypeptide: Large ribosomal subunit protein bL33 (55 aa).

It belongs to the bacterial ribosomal protein bL33 family.

This chain is Large ribosomal subunit protein bL33, found in Sodalis glossinidius (strain morsitans).